We begin with the raw amino-acid sequence, 100 residues long: Integration host factor subunit alpha (100 aa).

This sequence belongs to the bacterial histone-like protein family. Heterodimer of an alpha and a beta chain.

Its function is as follows. This protein is one of the two subunits of integration host factor, a specific DNA-binding protein that functions in genetic recombination as well as in transcriptional and translational control. This chain is Integration host factor subunit alpha, found in Rhizorhabdus wittichii (strain DSM 6014 / CCUG 31198 / JCM 15750 / NBRC 105917 / EY 4224 / RW1) (Sphingomonas wittichii).